Here is a 610-residue protein sequence, read N- to C-terminus: Dihydroxy-acid dehydratase (610 aa).

D81 contributes to the Mg(2+) binding site. C122 contributes to the [2Fe-2S] cluster binding site. Residues D123 and K124 each contribute to the Mg(2+) site. K124 carries the N6-carboxylysine modification. C196 contacts [2Fe-2S] cluster. A Mg(2+)-binding site is contributed by E492. Residue S518 is the Proton acceptor of the active site.

Belongs to the IlvD/Edd family. In terms of assembly, homodimer. It depends on [2Fe-2S] cluster as a cofactor. The cofactor is Mg(2+).

It catalyses the reaction (2R)-2,3-dihydroxy-3-methylbutanoate = 3-methyl-2-oxobutanoate + H2O. The enzyme catalyses (2R,3R)-2,3-dihydroxy-3-methylpentanoate = (S)-3-methyl-2-oxopentanoate + H2O. Its pathway is amino-acid biosynthesis; L-isoleucine biosynthesis; L-isoleucine from 2-oxobutanoate: step 3/4. It functions in the pathway amino-acid biosynthesis; L-valine biosynthesis; L-valine from pyruvate: step 3/4. Its function is as follows. Functions in the biosynthesis of branched-chain amino acids. Catalyzes the dehydration of (2R,3R)-2,3-dihydroxy-3-methylpentanoate (2,3-dihydroxy-3-methylvalerate) into 2-oxo-3-methylpentanoate (2-oxo-3-methylvalerate) and of (2R)-2,3-dihydroxy-3-methylbutanoate (2,3-dihydroxyisovalerate) into 2-oxo-3-methylbutanoate (2-oxoisovalerate), the penultimate precursor to L-isoleucine and L-valine, respectively. This is Dihydroxy-acid dehydratase from Ruegeria pomeroyi (strain ATCC 700808 / DSM 15171 / DSS-3) (Silicibacter pomeroyi).